The following is an 88-amino-acid chain: Large ribosomal subunit protein bL27 (88 aa).

A disordered region spans residues 1-21; the sequence is MAHKKAGGSSRNGRDSDGRRL.

The protein belongs to the bacterial ribosomal protein bL27 family.

In Methylobacterium nodulans (strain LMG 21967 / CNCM I-2342 / ORS 2060), this protein is Large ribosomal subunit protein bL27.